The sequence spans 602 residues: Cholinesterase (602 aa).

A signal peptide spans 1–28 (MQSKGTIISIQFLLRFLLLWVLIGKSHT). N-linked (GlcNAc...) asparagine glycosylation is present at Asn85. A disulfide bridge connects residues Cys93 and Cys120. A glycan (N-linked (GlcNAc...) asparagine) is linked at Asn134. Residue 144 to 145 (GG) participates in substrate binding. Catalysis depends on Ser226, which acts as the Acyl-ester intermediate. Ser226 bears the Phosphoserine mark. Residues Asn269 and Asn284 are each glycosylated (N-linked (GlcNAc...) asparagine). Residues Cys280 and Cys291 are joined by a disulfide bond. The active-site Charge relay system is Glu353. Asn369 is a glycosylation site (N-linked (GlcNAc...) asparagine). A disulfide bridge links Cys428 with Cys547. His466 functions as the Charge relay system in the catalytic mechanism. Asn483, Asn509, Asn513, and Asn514 each carry an N-linked (GlcNAc...) asparagine glycan.

It belongs to the type-B carboxylesterase/lipase family. In terms of assembly, homotetramer; disulfide-linked. Dimer of dimers.

It localises to the secreted. It catalyses the reaction an acylcholine + H2O = a carboxylate + choline + H(+). In terms of biological role, esterase with broad substrate specificity. Contributes to the inactivation of the neurotransmitter acetylcholine. Can degrade neurotoxic organophosphate esters. The polypeptide is Cholinesterase (BCHE) (Felis catus (Cat)).